Here is a 671-residue protein sequence, read N- to C-terminus: MPHLPDSMSPEAPAGPAPATLPAHPAQLLSDVAGLPPLPGVYRYFDFDGAVLYVGKAINLKKRVSSYFQKNHGGTRIGHMVSKIVRLETTVVRSEAEALLLENNLIKTLNPKYNILFRDDKSYPYLKMTGASSSSNPGTSFPRVSYYRGAVEKKHQYFGPYPSAWAVKEAILLMQKVFHLRTCEDPVFNNRTRPCLLYQIKRCSAPCVGHISAADYAQDVANAERFLRGDARQVMEALEARMMAHAEKLEFEQAAELRNQVAALSNVLHQQSVDNVADRDVDILAVKVQGGRACVNLAMVRGGRHLGDRPYFPAHVEDATEIYNAGGFEEAVEDSTTAPPVPSVETQVLEAFVAQHYLNVPVPPTLIVSAPVNKQLLEALAIQSGVKVTAVHQPREQRRVWLEMAQTNAGLQLARLLSEEGSQQARTRALAEALDLALDDLDALRVECFDISHTAGEATQASCVVFAHHKMQNAEYRRYNINDITPGDDYAAMRQVLLRRYGKLAETLREAQQTGQMPAGTGRLPDLVLVDGGRGQVSMAREVFEQLGLDLSLIVGVEKGEGRKVGLEELVFADGREKVYLGKDSAALMLVAQIRDEAHRFAITGMRAKRAKVRVDGGKLEEIPGIGPKRRSKLLQRFGGVRGVALAGAEDIATVAGISRELAEEIYRALH.

Residues 1-20 (MPHLPDSMSPEAPAGPAPAT) form a disordered region. Positions 10-20 (PEAPAGPAPAT) are enriched in low complexity. Residues 37–115 (PLPGVYRYFD…IKTLNPKYNI (79 aa)) enclose the GIY-YIG domain. The UVR domain occupies 232–267 (RQVMEALEARMMAHAEKLEFEQAAELRNQVAALSNV).

This sequence belongs to the UvrC family. In terms of assembly, interacts with UvrB in an incision complex.

It localises to the cytoplasm. Functionally, the UvrABC repair system catalyzes the recognition and processing of DNA lesions. UvrC both incises the 5' and 3' sides of the lesion. The N-terminal half is responsible for the 3' incision and the C-terminal half is responsible for the 5' incision. In Albidiferax ferrireducens (strain ATCC BAA-621 / DSM 15236 / T118) (Rhodoferax ferrireducens), this protein is UvrABC system protein C.